The chain runs to 660 residues: Histone deacetylase 5 (660 aa).

Ala-2 carries the N-acetylalanine modification. The interval 26–349 (KVGLIYDETM…SLACVQVLLE (324 aa)) is histone deacetylase. The Proton donor/acceptor role is filled by His-158. Zn(2+) is bound by residues Asp-198, His-200, and Asp-291.

The protein belongs to the histone deacetylase family. HD type 2 subfamily. In terms of assembly, interacts with HDA6. Zn(2+) serves as cofactor. As to expression, expressed in stems, leaves, flowers, siliques and mature seeds.

Its subcellular location is the nucleus. The protein localises to the cytoplasm. It catalyses the reaction N(6)-acetyl-L-lysyl-[histone] + H2O = L-lysyl-[histone] + acetate. With respect to regulation, inhibited by trichostatin A (TSA), a well-known histone deacetylase inhibitor. In terms of biological role, responsible for the deacetylation of lysine residues on the N-terminal part of the core histones (H2A, H2B, H3 and H4). Histone deacetylation gives a tag for epigenetic repression and plays an important role in transcriptional regulation, cell cycle progression and developmental events. Histone deacetylases act via the formation of large multiprotein complexes. Involved in the regulation of flowering time by repressing FLC and AGL27/MAF1 expression. Forms a histone deacetylase complex with HDA6, FLD and MSI4/FVE that represses FLC gene expression to control flowering time. Unlike its tandem duplication HDA18, HDA5 does not seem to be required for the cellular patterning in the root epidermis. The protein is Histone deacetylase 5 of Arabidopsis thaliana (Mouse-ear cress).